Reading from the N-terminus, the 462-residue chain is Argininosuccinate lyase (462 aa).

Belongs to the lyase 1 family. Argininosuccinate lyase subfamily.

The protein localises to the cytoplasm. The catalysed reaction is 2-(N(omega)-L-arginino)succinate = fumarate + L-arginine. Its pathway is amino-acid biosynthesis; L-arginine biosynthesis; L-arginine from L-ornithine and carbamoyl phosphate: step 3/3. This is Argininosuccinate lyase from Prochlorococcus marinus (strain MIT 9211).